The primary structure comprises 167 residues: uncharacterized protein (167 aa).

Residues 9–167 form the N-acetyltransferase domain; the sequence is PVMRRLTLQD…DCEVRMLREL (159 aa).

Belongs to the acetyltransferase family.

This is an uncharacterized protein from Escherichia coli (strain K12).